A 428-amino-acid chain; its full sequence is Adenylosuccinate synthetase (428 aa).

Residues 12-18 (GDEGKGK) and 40-42 (GHT) each bind GTP. Catalysis depends on Asp-13, which acts as the Proton acceptor. Positions 13 and 40 each coordinate Mg(2+). Residues 13–16 (DEGK), 38–41 (NAGH), Thr-130, Arg-144, Gln-225, Thr-240, and Arg-304 contribute to the IMP site. The active-site Proton donor is the His-41. 300–306 (VTTGRAR) serves as a coordination point for substrate. Residues Arg-306, 332-334 (KID), and 414-416 (SVG) each bind GTP.

It belongs to the adenylosuccinate synthetase family. As to quaternary structure, homodimer. The cofactor is Mg(2+).

It localises to the cytoplasm. It catalyses the reaction IMP + L-aspartate + GTP = N(6)-(1,2-dicarboxyethyl)-AMP + GDP + phosphate + 2 H(+). It functions in the pathway purine metabolism; AMP biosynthesis via de novo pathway; AMP from IMP: step 1/2. Plays an important role in the de novo pathway of purine nucleotide biosynthesis. Catalyzes the first committed step in the biosynthesis of AMP from IMP. This Clostridium botulinum (strain Okra / Type B1) protein is Adenylosuccinate synthetase.